The following is a 125-amino-acid chain: Succinate dehydrogenase cytochrome b560 subunit (125 aa).

Transmembrane regions (helical) follow at residues 29-49, 68-88, and 104-124; these read ISGVAMFTLIASPPLFLKLAT, ILPWFIVIISVIFLYHIINGI, and IIKDSNTLLALVFLIMLFKFI. Histidine 83 provides a ligand contact to heme.

This sequence belongs to the cytochrome b560 family. As to quaternary structure, forms part of complex II containing four subunits: a 70 kDa flavoprotein (FP), a 27 kDa iron-sulfur protein (IP), a cytochrome B and a membrane-anchoring protein. Requires heme as cofactor.

The protein resides in the mitochondrion inner membrane. It functions in the pathway carbohydrate metabolism; tricarboxylic acid cycle. In terms of biological role, membrane-anchoring subunit of succinate dehydrogenase (SDH) that is involved in complex II of the mitochondrial electron transport chain and is responsible for transferring electrons from succinate to ubiquinone (coenzyme Q). The chain is Succinate dehydrogenase cytochrome b560 subunit (SDH3) from Porphyra purpurea (Red seaweed).